Consider the following 116-residue polypeptide: Class I hydrophobin 1 (116 aa).

The signal sequence occupies residues 1–19 (MLFKQAILVATTLTDLAVA). 4 cysteine pairs are disulfide-bonded: Cys-35/Cys-95, Cys-42/Cys-89, Cys-43/Cys-76, and Cys-96/Cys-109. N-linked (GlcNAc...) asparagine glycosylation is found at Asn-44 and Asn-100.

The protein belongs to the fungal hydrophobin family. Self-assembles to form functional amyloid fibrils called rodlets. Self-assembly into fibrillar rodlets occurs spontaneously at hydrophobic:hydrophilic interfaces and the rodlets further associate laterally to form amphipathic monolayers.

Its subcellular location is the secreted. The protein resides in the cell wall. Its function is as follows. Aerial growth, conidiation, and dispersal of filamentous fungi in the environment rely upon a capability of their secreting small amphipathic proteins called hydrophobins (HPBs) with low sequence identity. Class I can self-assemble into an outermost layer of rodlet bundles on aerial cell surfaces, conferring cellular hydrophobicity that supports fungal growth, development and dispersal; whereas Class II form highly ordered films at water-air interfaces through intermolecular interactions but contribute nothing to the rodlet structure. This Pleurotus ostreatus (Oyster mushroom) protein is Class I hydrophobin 1.